A 338-amino-acid chain; its full sequence is UPF0324 membrane protein NMA0465 (338 aa).

Transmembrane regions (helical) follow at residues 5–23, 33–55, 62–84, 94–116, 123–145, 155–177, 222–239, 254–273, 280–302, and 312–334; these read PFYF…ANYL, HISA…YPQF, GVLF…RLTF, AVVT…GIRY, LVYL…AESV, VAIA…FYTW, IRVM…WLLT, IPWF…FDLL, LFVE…TTHA, and PFVL…NYGI.

The protein belongs to the UPF0324 family.

It localises to the cell membrane. This chain is UPF0324 membrane protein NMA0465, found in Neisseria meningitidis serogroup A / serotype 4A (strain DSM 15465 / Z2491).